We begin with the raw amino-acid sequence, 668 residues long: Tyrosine-protein phosphatase non-receptor type ptp-2 (668 aa).

SH2 domains lie at 10–113 and 134–232; these read NFYY…KKPV and WWHG…EEPL. Residues 264–580 form the Tyrosine-protein phosphatase domain; that stretch reads ISEEFDRLSQ…QFLYKALAFY (317 aa). C518 acts as the Phosphocysteine intermediate in catalysis. Residues 603–668 form a disordered region; that stretch reads PRRLRPTPNA…SSTLLKSTKK (66 aa). 2 stretches are compositionally biased toward low complexity: residues 616 to 634 and 652 to 668; these read SSARQVTSSRPSSSASSRT and STSSTSSSSTLLKSTKK.

This sequence belongs to the protein-tyrosine phosphatase family. Non-receptor class 2 subfamily. Expressed in embryonic cells, developing vulva, body wall muscles, head neurons and gonadal sheath cells.

The protein resides in the cytoplasm. It carries out the reaction O-phospho-L-tyrosyl-[protein] + H2O = L-tyrosyl-[protein] + phosphate. In terms of biological role, involved in embryonic and larval development. Plays a role in oogenesis by regulating mpk-1 phosphorylation and oocyte maturation in response to major sperm protein (MSP). During the formation of neuromuscular junctions at the larval stage, negatively regulates membrane protrusion from body wall muscles probably downstream of receptor egl-15. Plays a role in fluid homeostasis probably downstream of receptor egl-15 and adapter soc-1. Promotes vulva induction and negatively regulates fertility probably downstream of receptor let-23. Negatively regulates daf-2-mediated repression of dauer formation. The chain is Tyrosine-protein phosphatase non-receptor type ptp-2 from Caenorhabditis elegans.